Reading from the N-terminus, the 274-residue chain is Cell division protein FtsQ (274 aa).

The segment at 1–24 is disordered; the sequence is MRDLHAKKQRVPHNRVKKPPKERK. The Cytoplasmic segment spans residues 1 to 33; the sequence is MRDLHAKKQRVPHNRVKKPPKERKPINWGPILK. Positions 7-21 are enriched in basic residues; that stretch reads KKQRVPHNRVKKPPK. Residues 34-56 traverse the membrane as a helical segment; it reads FASRGFGGAALCAGLGFGGWQLY. The Periplasmic portion of the chain corresponds to 57-274; it reads NLVSRTTLLR…YADKIIVKKV (218 aa). In terms of domain architecture, POTRA spans 65–133; sequence LRLEAIEVSP…HTLSITVSER (69 aa).

Belongs to the FtsQ/DivIB family. FtsQ subfamily.

Its subcellular location is the cell inner membrane. Functionally, essential cell division protein. This chain is Cell division protein FtsQ, found in Geobacter sp. (strain M21).